Consider the following 329-residue polypeptide: Ethylene-responsive transcription factor ERF117 (329 aa).

Disordered regions lie at residues 25–51 (DATD…KPPK) and 71–90 (NSTG…FKGV). Polar residues predominate over residues 71–86 (NSTGNKAAGNRKTSSG). Residues 86–143 (GFKGVRRRPWGKFAAEIRNPFEKKRKWLGTFPTEEEAAEAYQKSKREFDERLGLVKQE) constitute a DNA-binding region (AP2/ERF).

Belongs to the AP2/ERF transcription factor family. ERF subfamily.

The protein resides in the nucleus. Its function is as follows. Probably acts as a transcriptional activator. Binds to the GCC-box pathogenesis-related promoter element. May be involved in the regulation of gene expression by stress factors and by components of stress signal transduction pathways. In Arabidopsis thaliana (Mouse-ear cress), this protein is Ethylene-responsive transcription factor ERF117 (ERF117).